Reading from the N-terminus, the 29-residue chain is Pyridoxal 5'-phosphate synthase subunit PdxS (29 aa).

This sequence belongs to the PdxS/SNZ family. As to quaternary structure, in the presence of PdxT, forms a dodecamer of heterodimers.

It carries out the reaction aldehydo-D-ribose 5-phosphate + D-glyceraldehyde 3-phosphate + L-glutamine = pyridoxal 5'-phosphate + L-glutamate + phosphate + 3 H2O + H(+). The protein operates within cofactor biosynthesis; pyridoxal 5'-phosphate biosynthesis. Its function is as follows. Catalyzes the formation of pyridoxal 5'-phosphate from ribose 5-phosphate (RBP), glyceraldehyde 3-phosphate (G3P) and ammonia. The ammonia is provided by the PdxT subunit. Can also use ribulose 5-phosphate and dihydroxyacetone phosphate as substrates, resulting from enzyme-catalyzed isomerization of RBP and G3P, respectively. The polypeptide is Pyridoxal 5'-phosphate synthase subunit PdxS (Clostridium pasteurianum).